A 287-amino-acid polypeptide reads, in one-letter code: Ret finger protein-like 4A (287 aa).

The RING-type; degenerate zinc-finger motif lies at 11–53 (CPVCLKDLEEAVQLKCGYACCLQCLNSLQKEPDGEGLLCRFCS). Positions 78–276 (EPKLKSVLTM…LSICSVINPS (199 aa)) constitute a B30.2/SPRY domain.

As to quaternary structure, interacts with PSMB1, UBE2A and CCNB1.

The protein localises to the cytoplasm. Its subcellular location is the nucleus. The protein is Ret finger protein-like 4A (RFPL4A) of Homo sapiens (Human).